A 380-amino-acid polypeptide reads, in one-letter code: RNA-binding motif protein, Y chromosome (380 aa).

One can recognise an RRM domain in the interval G8–R86. 2 disordered regions span residues K82–R226 and H279–S358. The segment covering R166–G178 has biased composition (polar residues). Composition is skewed to basic and acidic residues over residues R180–S190 and I333–K351.

In terms of assembly, interacts with SRSF3/SRP20, SRSF9/SRP30, SRSF5/SRP40, and SRSF6/SRP55; this interaction inhibits SRSF family member pre-mRNA splicing. Interacts with splicing factor proteins and KHDRBS3. Testis-specific.

The protein localises to the nucleus. RNA-binding protein involved in pre-mRNA splicing. Required for sperm development. Acts additively with TRA2B to promote exon 7 inclusion of the survival motor neuron SMN. Binds non-specifically to mRNAs. The sequence is that of RNA-binding motif protein, Y chromosome from Mus musculus (Mouse).